A 127-amino-acid chain; its full sequence is Large ribosomal subunit protein bL20 (127 aa).

It belongs to the bacterial ribosomal protein bL20 family.

Functionally, binds directly to 23S ribosomal RNA and is necessary for the in vitro assembly process of the 50S ribosomal subunit. It is not involved in the protein synthesizing functions of that subunit. This is Large ribosomal subunit protein bL20 from Opitutus terrae (strain DSM 11246 / JCM 15787 / PB90-1).